We begin with the raw amino-acid sequence, 57 residues long: Orphan toxin OrtT (57 aa).

The next 2 helical transmembrane spans lie at 6–26 (HMLV…WFLS) and 34–54 (FLSA…ALLF).

The protein belongs to the GhoT/OrtT toxin family.

Its subcellular location is the cell inner membrane. In terms of biological role, acts as an orphan toxin which is important for maintaining cell fitness during stress related to the stringent response. Increases the formation of persister cells. Has no known antitoxin. The protein is Orphan toxin OrtT of Escherichia coli O6:H1 (strain CFT073 / ATCC 700928 / UPEC).